Here is a 470-residue protein sequence, read N- to C-terminus: Chromosomal replication initiator protein DnaA (470 aa).

The interval 1 to 89 (MIESNHVVLW…YNVMVDKTSI (89 aa)) is domain I, interacts with DnaA modulators. The interval 89–130 (IPNQTVNLEASNRSTAVTPKSIVGGNKAPSFLKAPAVQDLDP) is domain II. Residues 131 to 348 (HLNPNYNFEN…GIVIAIMARS (218 aa)) are domain III, AAA+ region. ATP contacts are provided by Gly176, Gly178, Lys179, and Thr180. A domain IV, binds dsDNA region spans residues 349–470 (TIFNKEIDLD…EIESLLKKKA (122 aa)).

The protein belongs to the DnaA family. As to quaternary structure, oligomerizes as a right-handed, spiral filament on DNA at oriC.

It is found in the cytoplasm. Its function is as follows. Plays an essential role in the initiation and regulation of chromosomal replication. ATP-DnaA binds to the origin of replication (oriC) to initiate formation of the DNA replication initiation complex once per cell cycle. Binds the DnaA box (a 9 base pair repeat at the origin) and separates the double-stranded (ds)DNA. Forms a right-handed helical filament on oriC DNA; dsDNA binds to the exterior of the filament while single-stranded (ss)DNA is stabiized in the filament's interior. The ATP-DnaA-oriC complex binds and stabilizes one strand of the AT-rich DNA unwinding element (DUE), permitting loading of DNA polymerase. After initiation quickly degrades to an ADP-DnaA complex that is not apt for DNA replication. Binds acidic phospholipids. The sequence is that of Chromosomal replication initiator protein DnaA from Bacteroides thetaiotaomicron (strain ATCC 29148 / DSM 2079 / JCM 5827 / CCUG 10774 / NCTC 10582 / VPI-5482 / E50).